The sequence spans 709 residues: Ribosomal RNA large subunit methyltransferase K/L (709 aa).

Residues 43–154 enclose the THUMP domain; sequence LAYRITLWTR…NGVITIAMNF (112 aa).

It belongs to the methyltransferase superfamily. RlmKL family.

It localises to the cytoplasm. It catalyses the reaction guanosine(2445) in 23S rRNA + S-adenosyl-L-methionine = N(2)-methylguanosine(2445) in 23S rRNA + S-adenosyl-L-homocysteine + H(+). It carries out the reaction guanosine(2069) in 23S rRNA + S-adenosyl-L-methionine = N(2)-methylguanosine(2069) in 23S rRNA + S-adenosyl-L-homocysteine + H(+). Specifically methylates the guanine in position 2445 (m2G2445) and the guanine in position 2069 (m7G2069) of 23S rRNA. The protein is Ribosomal RNA large subunit methyltransferase K/L of Shewanella baltica (strain OS195).